The primary structure comprises 273 residues: Tyrosinase (273 aa).

The N-terminal stretch at Met-1 to Gly-18 is a signal peptide. N-linked (GlcNAc...) asparagine glycosylation is found at Asn-86, Asn-111, and Asn-161. Cu cation contacts are provided by His-180, His-202, and His-211. Asn-230 is a glycosylation site (N-linked (GlcNAc...) asparagine).

Belongs to the tyrosinase family. Cu(2+) serves as cofactor.

Its subcellular location is the melanosome membrane. The protein localises to the melanosome. It carries out the reaction 2 L-dopa + O2 = 2 L-dopaquinone + 2 H2O. It catalyses the reaction L-tyrosine + O2 = L-dopaquinone + H2O. In terms of biological role, this is a copper-containing oxidase that functions in the formation of pigments such as melanins and other polyphenolic compounds. Catalyzes the initial and rate limiting step in the cascade of reactions leading to melanin production from tyrosine. In addition to hydroxylating tyrosine to DOPA (3,4-dihydroxyphenylalanine), also catalyzes the oxidation of DOPA to DOPA-quinone, and possibly the oxidation of DHI (5,6-dihydroxyindole) to indole-5,6 quinone. This chain is Tyrosinase (TYR), found in Coturnix japonica (Japanese quail).